Consider the following 508-residue polypeptide: D-alanine--D-alanyl carrier protein ligase (508 aa).

152–153 (TS) contributes to the ATP binding site. Asp-198 is a D-alanine binding site. 293 to 298 (NTYGPT) lines the ATP pocket. Val-302 lines the D-alanine pocket. Residues Asp-384, 396 to 399 (YRGR), and Lys-495 each bind ATP. Position 495 (Lys-495) interacts with D-alanine.

The protein belongs to the ATP-dependent AMP-binding enzyme family. DltA subfamily.

It localises to the cytoplasm. The enzyme catalyses holo-[D-alanyl-carrier protein] + D-alanine + ATP = D-alanyl-[D-alanyl-carrier protein] + AMP + diphosphate. The protein operates within cell wall biogenesis; lipoteichoic acid biosynthesis. Its function is as follows. Catalyzes the first step in the D-alanylation of lipoteichoic acid (LTA), the activation of D-alanine and its transfer onto the D-alanyl carrier protein (Dcp) DltC. In an ATP-dependent two-step reaction, forms a high energy D-alanyl-AMP intermediate, followed by transfer of the D-alanyl residue as a thiol ester to the phosphopantheinyl prosthetic group of the Dcp. D-alanylation of LTA plays an important role in modulating the properties of the cell wall in Gram-positive bacteria, influencing the net charge of the cell wall. This Lactiplantibacillus plantarum (strain ATCC BAA-793 / NCIMB 8826 / WCFS1) (Lactobacillus plantarum) protein is D-alanine--D-alanyl carrier protein ligase.